Consider the following 732-residue polypeptide: Elongation factor 2 (732 aa).

Positions 19–260 (ERIRNIGIAA…MVVRHLPSPI (242 aa)) constitute a tr-type G domain. GTP is bound by residues 28–35 (AHIDHGKT), 94–98 (DTPGH), and 148–151 (NKVD). The residue at position 597 (His597) is a Diphthamide.

The protein belongs to the TRAFAC class translation factor GTPase superfamily. Classic translation factor GTPase family. EF-G/EF-2 subfamily.

The protein localises to the cytoplasm. In terms of biological role, catalyzes the GTP-dependent ribosomal translocation step during translation elongation. During this step, the ribosome changes from the pre-translocational (PRE) to the post-translocational (POST) state as the newly formed A-site-bound peptidyl-tRNA and P-site-bound deacylated tRNA move to the P and E sites, respectively. Catalyzes the coordinated movement of the two tRNA molecules, the mRNA and conformational changes in the ribosome. The protein is Elongation factor 2 (fusA) of Pyrococcus furiosus (strain ATCC 43587 / DSM 3638 / JCM 8422 / Vc1).